The following is a 245-amino-acid chain: Zinc finger CCCH domain-containing protein 54 (245 aa).

The segment at Thr92–Phe119 adopts a C3H1-type zinc-finger fold. A disordered region spans residues Gly175 to Asp204.

As to quaternary structure, interacts with MARD1/FLZ9 and RD21A. As to expression, specifically expressed in embryo (at protein level).

The protein localises to the nucleus. Functionally, embryo-specific transcription factor required at the globular to heart stage transition in embryo development. This is Zinc finger CCCH domain-containing protein 54 from Arabidopsis thaliana (Mouse-ear cress).